The sequence spans 776 residues: E3 ubiquitin-protein ligase UHRF1 (776 aa).

One can recognise a Ubiquitin-like domain in the interval Met-1–Ala-78. The interval Ala-88–Thr-126 is disordered. Over residues Ser-93 to Ser-102 the composition is skewed to polar residues. Residues Glu-103–Ser-113 are compositionally biased toward basic and acidic residues. The segment covering Asp-114–Thr-126 has biased composition (polar residues). Tudor-like stretches follow at residues Gly-135–Arg-201 and Gln-208–Pro-277. The disordered stretch occupies residues Gly-278–Pro-298. Residues Pro-290–Glu-299 are linker. The segment at Gly-297–Asp-364 adopts a PHD-type zinc-finger fold. 2 histone H3R2me0 binding regions span residues Cys-331–Asp-335 and Pro-351–Asp-353. The 164-residue stretch at Gly-417–Arg-580 folds into the YDG domain. Residues His-443–Val-444 are required to promote base flipping. DNA is bound by residues Ala-461–Gly-462 and Asp-467. 2 required for formation of a 5-methylcytosine-binding pocket regions span residues Tyr-464–Asp-467 and Tyr-476–Ser-479. The tract at residues Glu-617 to Val-660 is disordered. Ser-649 bears the Phosphoserine; by CDK2 mark. Residues Cys-706–Arg-745 form an RING-type zinc finger.

In terms of processing, phosphorylation at Ser-649 is required for gastrulation. Expressed in proliferating tissues. Highly expressed 24-48 hours after fertilization (hpf) in rapidly proliferating tissues, including the tectum, retina and brachial arches. Preferentially expressed in the liver bud and expression is maintained in the fully developed liver. Also expressed in the proximal gut. In adult, the highest expression is detected in testis.

The protein resides in the nucleus. Its subcellular location is the cytoplasm. It catalyses the reaction S-ubiquitinyl-[E2 ubiquitin-conjugating enzyme]-L-cysteine + [acceptor protein]-L-lysine = [E2 ubiquitin-conjugating enzyme]-L-cysteine + N(6)-ubiquitinyl-[acceptor protein]-L-lysine.. Its pathway is protein modification; protein ubiquitination. Its function is as follows. Multidomain protein that acts as a key epigenetic regulator by bridging DNA methylation and chromatin modification. Specifically recognizes and binds hemimethylated DNA at replication forks via its YDG domain and recruits dnmt1 methyltransferase to ensure faithful propagation of the DNA methylation patterns through DNA replication. In addition to its role in maintenance of DNA methylation, also plays a key role in chromatin modification: through its tudor-like regions and PHD-type zinc fingers, specifically recognizes and binds histone H3 trimethylated at 'Lys-9' (H3K9me3) and unmethylated at 'Arg-2' (H3R2me0), respectively, and recruits chromatin proteins. Enriched in pericentric heterochromatin where it recruits different chromatin modifiers required for this chromatin replication. Also localizes to euchromatic regions where it negatively regulates transcription possibly by impacting DNA methylation and histone modifications. Has E3 ubiquitin-protein ligase activity by mediating the ubiquitination of target proteins. However, it is still unclear how E3 ubiquitin-protein ligase activity is related to its role in chromatin in vivo. Required for pregastrula and lens development. The polypeptide is E3 ubiquitin-protein ligase UHRF1 (uhrf1) (Danio rerio (Zebrafish)).